We begin with the raw amino-acid sequence, 87 residues long: Small ribosomal subunit protein uS15c (87 aa).

Belongs to the universal ribosomal protein uS15 family. In terms of assembly, part of the 30S ribosomal subunit.

Its subcellular location is the plastid. It localises to the chloroplast. In Solanum bulbocastanum (Wild potato), this protein is Small ribosomal subunit protein uS15c (rps15).